A 540-amino-acid polypeptide reads, in one-letter code: Cytokinin dehydrogenase 5 (540 aa).

The first 22 residues, 1–22, serve as a signal peptide directing secretion; the sequence is MNREMTSSFLLLTFAICKLIIA. One can recognise an FAD-binding PCMH-type domain in the interval 63–241; it reads SPEEPLAVLH…TRARISLEPA (179 aa). Positions 97, 99, and 101 each coordinate FAD. Pros-8alpha-FAD histidine is present on histidine 102. FAD is bound by residues serine 103, glutamine 107, aspartate 165, threonine 170, serine 176, isoleucine 180, and isoleucine 231. 2 N-linked (GlcNAc...) asparagine glycosylation sites follow: asparagine 310 and asparagine 406. The FAD site is built by tyrosine 479 and glutamine 517.

The protein belongs to the oxygen-dependent FAD-linked oxidoreductase family. FAD is required as a cofactor. Expressed in the developing leaf petioles and in the rib zone of the axillary shoot meristems. In roots, expressed in the vascular cylinder within the root apical meristem and only faintly detectable in the differentiated root.

It localises to the secreted. The protein resides in the extracellular space. The enzyme catalyses N(6)-dimethylallyladenine + A + H2O = 3-methyl-2-butenal + adenine + AH2. Catalyzes the oxidation of cytokinins, a family of N(6)-substituted adenine derivatives that are plant hormones, where the substituent is an isopentenyl group. In association with CKX3 regulates the activity of the reproductive meristems, flower organ size and ovule formation. The chain is Cytokinin dehydrogenase 5 (CKX5) from Arabidopsis thaliana (Mouse-ear cress).